The following is an 87-amino-acid chain: U-scoloptoxin(23)-Er1a (87 aa).

Residues 1-29 (MSLIVVRTHSFLFVLVLLLFASVFHSVDS) form the signal peptide. The disordered stretch occupies residues 32–54 (FNPNGRYGRRDSASALSDASENK).

The protein belongs to the scoloptoxin-23 family. As to expression, expressed by the venom gland.

It is found in the secreted. In Ethmostigmus rubripes (Giant centipede), this protein is U-scoloptoxin(23)-Er1a.